A 415-amino-acid polypeptide reads, in one-letter code: Dynein assembly factor with WD repeat domains 1 (415 aa).

WD repeat units lie at residues alanine 90 to threonine 129, glycine 132 to arginine 174, glycine 175 to threonine 214, glycine 217 to isoleucine 256, glycine 259 to threonine 298, glycine 301 to lysine 340, glycine 343 to glutamate 384, and histidine 386 to arginine 415.

Belongs to the WD repeat WDR69 family. As to quaternary structure, interacts with IFT46.

Its subcellular location is the cytoplasm. The protein resides in the cytoskeleton. It localises to the flagellum basal body. It is found in the flagellum axoneme. Functionally, required for axonemal dynein assembly and ciliary motility in ciliated organs, including Kupffer's vesicle, during embryogenesis. Facilitates the onset of robust cilia motility during development. This chain is Dynein assembly factor with WD repeat domains 1, found in Homo sapiens (Human).